A 21-amino-acid polypeptide reads, in one-letter code: Hemocyanin subunit 6 (21 aa).

Belongs to the tyrosinase family. Hemocyanin subfamily. In terms of tissue distribution, hemolymph.

Its subcellular location is the secreted. It is found in the extracellular space. Hemocyanins are copper-containing oxygen carriers occurring freely dissolved in the hemolymph of many mollusks and arthropods. In Maja squinado (Mediterranean spider crab), this protein is Hemocyanin subunit 6.